We begin with the raw amino-acid sequence, 228 residues long: PKHD-type hydroxylase RPE_4577 (228 aa).

One can recognise a Fe2OG dioxygenase domain in the interval 78-180 (TIFPPLFNRY…RIASFFWTQS (103 aa)). Positions 98, 100, and 161 each coordinate Fe cation. Residue R171 participates in 2-oxoglutarate binding.

Fe(2+) serves as cofactor. The cofactor is L-ascorbate.

In Rhodopseudomonas palustris (strain BisA53), this protein is PKHD-type hydroxylase RPE_4577.